A 225-amino-acid polypeptide reads, in one-letter code: MAGLFITFEGGEGAGKTTVIQHIFQKLIAQGIDVIQTREPGGIKISEKIRSIIHDPEHLEMEERTEALLYAAARRQHLVEKVFPALEQGKVVLCDRFVDSSLAYQGYARGLGIDEVYAINHFVIQDCMPDLTLFFDIEPKKGLERIAANKNRERNRLDLENMQFHEAVYEGYQKVIARFPERIKTIQAEQALEAVEQDTMEIISSFLNEKEKGGNNEINYYGDSR.

10–17 contacts ATP; sequence GGEGAGKT.

This sequence belongs to the thymidylate kinase family.

It catalyses the reaction dTMP + ATP = dTDP + ADP. Phosphorylation of dTMP to form dTDP in both de novo and salvage pathways of dTTP synthesis. The protein is Thymidylate kinase of Oceanobacillus iheyensis (strain DSM 14371 / CIP 107618 / JCM 11309 / KCTC 3954 / HTE831).